A 94-amino-acid chain; its full sequence is Large ribosomal subunit protein bL25 (94 aa).

It belongs to the bacterial ribosomal protein bL25 family. As to quaternary structure, part of the 50S ribosomal subunit; part of the 5S rRNA/L5/L18/L25 subcomplex. Contacts the 5S rRNA. Binds to the 5S rRNA independently of L5 and L18.

In terms of biological role, this is one of the proteins that binds to the 5S RNA in the ribosome where it forms part of the central protuberance. The protein is Large ribosomal subunit protein bL25 of Proteus mirabilis (strain HI4320).